We begin with the raw amino-acid sequence, 418 residues long: Serpin A9 (418 aa).

An N-terminal signal peptide occupies residues 1 to 25; sequence MGSSSFYRVLLLVGFCAPIFCMLSS. N-linked (GlcNAc...) asparagine glycosylation is found at N103, N213, and N224.

The protein belongs to the serpin family.

It is found in the secreted. This Mus musculus (Mouse) protein is Serpin A9 (Serpina9).